A 149-amino-acid chain; its full sequence is Large ribosomal subunit protein bL9 (149 aa).

Belongs to the bacterial ribosomal protein bL9 family.

Functionally, binds to the 23S rRNA. The chain is Large ribosomal subunit protein bL9 from Helicobacter pylori (strain ATCC 700392 / 26695) (Campylobacter pylori).